Consider the following 521-residue polypeptide: Phospholipase C B (521 aa).

Residues 1 to 39 (MGSEHPVDGMTRRQFFAKAAAATTAGAFMSLAGPIIEKA) constitute a signal peptide (tat-type signal). A disordered region spans residues 501–521 (FPQSMPTQETAPTRGIPSGLC).

Belongs to the bacterial phospholipase C family. Predicted to be exported by the Tat system. The position of the signal peptide cleavage has not been experimentally proven.

The protein resides in the secreted. The protein localises to the cell wall. It carries out the reaction a 1,2-diacyl-sn-glycero-3-phosphocholine + H2O = phosphocholine + a 1,2-diacyl-sn-glycerol + H(+). In terms of biological role, involved in virulence. Induces cytotoxic effects on mouse macrophage cell lines, via direct or indirect enzymatic hydrolysis of cell membrane phospholipids. Hydrolyzes phosphatidylcholine. In Mycobacterium tuberculosis (strain CDC 1551 / Oshkosh), this protein is Phospholipase C B.